Consider the following 139-residue polypeptide: Small ribosomal subunit protein uS11 (139 aa).

The span at Met1–Thr13 shows a compositional bias: low complexity. Positions Met1–Gln30 are disordered. Residues Lys14 to Lys23 show a composition bias toward basic residues.

Belongs to the universal ribosomal protein uS11 family. As to quaternary structure, part of the 30S ribosomal subunit. Interacts with proteins S7 and S18. Binds to IF-3.

Located on the platform of the 30S subunit, it bridges several disparate RNA helices of the 16S rRNA. Forms part of the Shine-Dalgarno cleft in the 70S ribosome. This Roseiflexus sp. (strain RS-1) protein is Small ribosomal subunit protein uS11.